We begin with the raw amino-acid sequence, 110 residues long: Large ribosomal subunit protein mL60 (110 aa).

Belongs to the mitochondrion-specific ribosomal protein mL60 family. As to quaternary structure, component of the mitochondrial large ribosomal subunit (mt-LSU). Mature N.crassa 74S mitochondrial ribosomes consist of a small (37S) and a large (54S) subunit. The 37S small subunit contains a 16S ribosomal RNA (16S mt-rRNA) and 32 different proteins. The 54S large subunit contains a 23S rRNA (23S mt-rRNA) and 42 different proteins.

The protein resides in the mitochondrion. In terms of biological role, component of the mitochondrial ribosome (mitoribosome), a dedicated translation machinery responsible for the synthesis of mitochondrial genome-encoded proteins, including at least some of the essential transmembrane subunits of the mitochondrial respiratory chain. The mitoribosomes are attached to the mitochondrial inner membrane and translation products are cotranslationally integrated into the membrane. In Neurospora crassa (strain ATCC 24698 / 74-OR23-1A / CBS 708.71 / DSM 1257 / FGSC 987), this protein is Large ribosomal subunit protein mL60 (mrpl31).